A 696-amino-acid polypeptide reads, in one-letter code: Polyribonucleotide nucleotidyltransferase (696 aa).

D486 and D492 together coordinate Mg(2+). Residues 553-612 (PRIIVRNIPKDRIGELIGPGGKNVRGISELTGAELYIEDDGRVTISGSNQESAEKAAKMV) form the KH domain. One can recognise an S1 motif domain in the interval 622–690 (GKIYEGKVKR…KTGKIDLSRK (69 aa)).

The protein belongs to the polyribonucleotide nucleotidyltransferase family. Mg(2+) is required as a cofactor.

The protein localises to the cytoplasm. It carries out the reaction RNA(n+1) + phosphate = RNA(n) + a ribonucleoside 5'-diphosphate. Functionally, involved in mRNA degradation. Catalyzes the phosphorolysis of single-stranded polyribonucleotides processively in the 3'- to 5'-direction. The protein is Polyribonucleotide nucleotidyltransferase of Leptospira borgpetersenii serovar Hardjo-bovis (strain L550).